The following is a 40-amino-acid chain: Neutral phospholipase A2 homolog cannitoxin beta chain 2 (40 aa).

As to quaternary structure, heterotrimer of alpha, beta, and gamma chains; non-covalently linked. In terms of tissue distribution, expressed by the venom gland.

It is found in the secreted. Functionally, heterotrimer: Snake venom phospholipase A2 (PLA2) heterotrimer that acts as a potent presynaptic neurotoxin by blocking synaptic transmission and synaptic vesicle recycling. Enzymatic activity is essential for the neurotoxic effects. May act by binding in a calcium-dependent fashion to neurotonal pentraxin-1 (NPTX1) and neurotonal pentraxin-2 (NPTX2), but not to neuronal pentraxin receptor (NPTXR). Also binds to taipoxin-associated calcium binding protein 49 (RCN2), a protein localized in the lumen of endoplasmic reticulum. Monomer (beta chain): Snake venom phospholipase A2 homolog that is neither toxic nor enzymatically active. Does not bind calcium. The polypeptide is Neutral phospholipase A2 homolog cannitoxin beta chain 2 (Oxyuranus scutellatus canni (Papuan taipan)).